A 90-amino-acid chain; its full sequence is DNA-binding protein HU (90 aa).

Belongs to the bacterial histone-like protein family. In terms of assembly, homodimer.

In terms of biological role, histone-like DNA-binding protein which is capable of wrapping DNA to stabilize it, and thus to prevent its denaturation under extreme environmental conditions. The chain is DNA-binding protein HU (hup) from Staphylococcus aureus (strain COL).